Consider the following 205-residue polypeptide: MKLDVIKLDGEAAGSVELDEALFGLEPRADILHRVVRWQRNKAQAGTHKVKTRSEVSYSTKKIYRQKGTGGARHGARSAPIFRKGGIYKGPTPRSHAHDLPKKFRKLGLKHALSAKAKAGELVVIDMATSEGKTATLAKQIKNLGWKRALVIDGAQVDAGFAKAAANIDTLDVLPSMGANVYDILKRDTLVLTKAGVEALEARLK.

This sequence belongs to the universal ribosomal protein uL4 family. In terms of assembly, part of the 50S ribosomal subunit.

Functionally, one of the primary rRNA binding proteins, this protein initially binds near the 5'-end of the 23S rRNA. It is important during the early stages of 50S assembly. It makes multiple contacts with different domains of the 23S rRNA in the assembled 50S subunit and ribosome. Forms part of the polypeptide exit tunnel. The polypeptide is Large ribosomal subunit protein uL4 (Dinoroseobacter shibae (strain DSM 16493 / NCIMB 14021 / DFL 12)).